A 518-amino-acid chain; its full sequence is Bifunctional purine biosynthesis protein PurH (518 aa).

Residues 1–146 (MARIALISVS…KNHESVSILT (146 aa)) form the MGS-like domain.

It belongs to the PurH family.

It catalyses the reaction (6R)-10-formyltetrahydrofolate + 5-amino-1-(5-phospho-beta-D-ribosyl)imidazole-4-carboxamide = 5-formamido-1-(5-phospho-D-ribosyl)imidazole-4-carboxamide + (6S)-5,6,7,8-tetrahydrofolate. The enzyme catalyses IMP + H2O = 5-formamido-1-(5-phospho-D-ribosyl)imidazole-4-carboxamide. It functions in the pathway purine metabolism; IMP biosynthesis via de novo pathway; 5-formamido-1-(5-phospho-D-ribosyl)imidazole-4-carboxamide from 5-amino-1-(5-phospho-D-ribosyl)imidazole-4-carboxamide (10-formyl THF route): step 1/1. The protein operates within purine metabolism; IMP biosynthesis via de novo pathway; IMP from 5-formamido-1-(5-phospho-D-ribosyl)imidazole-4-carboxamide: step 1/1. The sequence is that of Bifunctional purine biosynthesis protein PurH from Prochlorococcus marinus (strain MIT 9211).